A 213-amino-acid polypeptide reads, in one-letter code: 3-demethoxyubiquinol 3-hydroxylase (213 aa).

Fe cation contacts are provided by Glu62, Glu92, His95, Glu144, Glu176, and His179.

The protein belongs to the COQ7 family. Fe cation serves as cofactor.

The protein resides in the cell membrane. The enzyme catalyses a 5-methoxy-2-methyl-3-(all-trans-polyprenyl)benzene-1,4-diol + AH2 + O2 = a 3-demethylubiquinol + A + H2O. Its pathway is cofactor biosynthesis; ubiquinone biosynthesis. In terms of biological role, catalyzes the hydroxylation of 2-nonaprenyl-3-methyl-6-methoxy-1,4-benzoquinol during ubiquinone biosynthesis. The protein is 3-demethoxyubiquinol 3-hydroxylase of Legionella pneumophila (strain Paris).